The chain runs to 612 residues: Elongation factor 4 (612 aa).

Residues 11-193 (KHIRNFSIVA…RIVTDISAPT (183 aa)) form the tr-type G domain. Residues 23–28 (DHGKST) and 140–143 (NKID) contribute to the GTP site.

This sequence belongs to the TRAFAC class translation factor GTPase superfamily. Classic translation factor GTPase family. LepA subfamily.

It localises to the cell membrane. The catalysed reaction is GTP + H2O = GDP + phosphate + H(+). Functionally, required for accurate and efficient protein synthesis under certain stress conditions. May act as a fidelity factor of the translation reaction, by catalyzing a one-codon backward translocation of tRNAs on improperly translocated ribosomes. Back-translocation proceeds from a post-translocation (POST) complex to a pre-translocation (PRE) complex, thus giving elongation factor G a second chance to translocate the tRNAs correctly. Binds to ribosomes in a GTP-dependent manner. This is Elongation factor 4 from Lactobacillus delbrueckii subsp. bulgaricus (strain ATCC 11842 / DSM 20081 / BCRC 10696 / JCM 1002 / NBRC 13953 / NCIMB 11778 / NCTC 12712 / WDCM 00102 / Lb 14).